The chain runs to 291 residues: 2-C-methyl-D-erythritol 4-phosphate cytidylyltransferase (291 aa).

The tract at residues 1-23 (MTERDFDTPVETPTVQPAPAQGA) is disordered.

The protein belongs to the IspD/TarI cytidylyltransferase family. IspD subfamily.

The enzyme catalyses 2-C-methyl-D-erythritol 4-phosphate + CTP + H(+) = 4-CDP-2-C-methyl-D-erythritol + diphosphate. It participates in isoprenoid biosynthesis; isopentenyl diphosphate biosynthesis via DXP pathway; isopentenyl diphosphate from 1-deoxy-D-xylulose 5-phosphate: step 2/6. Catalyzes the formation of 4-diphosphocytidyl-2-C-methyl-D-erythritol from CTP and 2-C-methyl-D-erythritol 4-phosphate (MEP). The chain is 2-C-methyl-D-erythritol 4-phosphate cytidylyltransferase from Bifidobacterium longum (strain DJO10A).